The chain runs to 295 residues: MEEFDSEDFSTSDEDEDYLPSGGEYSEDDVNELVKEDEVDGEEQAEKTKGKRRKAQGIPARKRKQSGLLLEEEEDGKEDSGGSSSEEDEEEQEGGLGSENARKKKEDELWASFLNDVGPKSKAAPGSQTKVAEETEEISSNKPLVKADELDKPRESEKVKITKVFDFAGEEVRVTKEVDAASKEAKSFLKQTEREKPQALVTSPATPLPAGSGIKRASGMSSLLGKIGAKKQKMSTLEKSKLDWESFKEEEGIGEELAIHNRGKEGYIERKAFLDRVDHRQFEIERDLRLSKMKP.

2 stretches are compositionally biased toward acidic residues: residues 1 to 18 (MEEF…DEDY) and 25 to 43 (YSED…DGEE). 2 disordered regions span residues 1-153 (MEEF…LDKP) and 188-217 (FLKQ…IKRA). Positions 49–65 (KGKRRKAQGIPARKRKQ) are enriched in basic residues. 4 positions are modified to phosphoserine: serine 80, serine 83, serine 84, and serine 112. A Glycyl lysine isopeptide (Lys-Gly) (interchain with G-Cter in SUMO2) cross-link involves residue lysine 146. The tract at residues 174-213 (VTKEVDAASKEAKSFLKQTEREKPQALVTSPATPLPAGSG) is hydrophilic. The segment covering 188–197 (FLKQTEREKP) has biased composition (basic and acidic residues). Position 212 is a phosphoserine (serine 212). Residues 214-295 (IKRASGMSSL…RDLRLSKMKP (82 aa)) form the BCNT-C domain. N6-methyllysine is present on lysine 215. Residue serine 246 is modified to Phosphoserine.

As to expression, expressed in lung, liver and heart, with higher expression in teeth.

The protein localises to the chromosome. It is found in the centromere. Its subcellular location is the kinetochore. Functionally, may play a role during embryogenesis. May modulate tooth organogenesis since alterations of this protein function affect tooth organs size as well as individual cell fate and survival. In embryonic cells, blockage of the function results in increased number of apoptotic cells, reduced proliferation, alterations in cell shape and fibronection matrix synthesis. This Mus musculus (Mouse) protein is Craniofacial development protein 1 (Cfdp1).